A 212-amino-acid polypeptide reads, in one-letter code: uncharacterized protein (212 aa).

The signal sequence occupies residues Met-1–Ala-20.

This is an uncharacterized protein from Archaeoglobus fulgidus (strain ATCC 49558 / DSM 4304 / JCM 9628 / NBRC 100126 / VC-16).